The chain runs to 375 residues: Queuine tRNA-ribosyltransferase (375 aa).

The active-site Proton acceptor is D90. Residues 90-94, D144, Q190, and G217 contribute to the substrate site; that span reads DSGGF. The interval 248 to 254 is RNA binding; the sequence is GIGTPHY. D267 (nucleophile) is an active-site residue. Residues 272–276 are RNA binding; important for wobble base 34 recognition; it reads TRIAR. The Zn(2+) site is built by C305, C307, C310, and H336.

Belongs to the queuine tRNA-ribosyltransferase family. As to quaternary structure, homodimer. Within each dimer, one monomer is responsible for RNA recognition and catalysis, while the other monomer binds to the replacement base PreQ1. Zn(2+) serves as cofactor.

The catalysed reaction is 7-aminomethyl-7-carbaguanine + guanosine(34) in tRNA = 7-aminomethyl-7-carbaguanosine(34) in tRNA + guanine. The protein operates within tRNA modification; tRNA-queuosine biosynthesis. Its function is as follows. Catalyzes the base-exchange of a guanine (G) residue with the queuine precursor 7-aminomethyl-7-deazaguanine (PreQ1) at position 34 (anticodon wobble position) in tRNAs with GU(N) anticodons (tRNA-Asp, -Asn, -His and -Tyr). Catalysis occurs through a double-displacement mechanism. The nucleophile active site attacks the C1' of nucleotide 34 to detach the guanine base from the RNA, forming a covalent enzyme-RNA intermediate. The proton acceptor active site deprotonates the incoming PreQ1, allowing a nucleophilic attack on the C1' of the ribose to form the product. After dissociation, two additional enzymatic reactions on the tRNA convert PreQ1 to queuine (Q), resulting in the hypermodified nucleoside queuosine (7-(((4,5-cis-dihydroxy-2-cyclopenten-1-yl)amino)methyl)-7-deazaguanosine). The polypeptide is Queuine tRNA-ribosyltransferase (Borrelia hermsii (strain HS1 / DAH)).